Reading from the N-terminus, the 1182-residue chain is Tyrosine-protein kinase ABL2 (1182 aa).

Residues 1–42 (MGQQVGRVGEAPGLQQPQPRGIRGSSAARPSGRRRDPAGRTA) are disordered. Gly2 carries the N-myristoyl glycine lipid modification. The interval 2–106 (GQQVGRVGEA…SKENLLGATE (105 aa)) is CAP. Residues 20-30 (RGIRGSSAARP) show a composition bias toward low complexity. Ser97 is modified (phosphoserine). The region spanning 107–167 (SDPNLFVALY…PSNYITPVNS (61 aa)) is the SH3 domain. Phosphotyrosine occurs at positions 116, 161, 174, 185, 218, and 231. The region spanning 173–263 (WYHGPVSRSA…GLVTTLHYPA (91 aa)) is the SH2 domain. Tyr261 bears the Phosphotyrosine; by ABL1 and autocatalysis mark. Tyr272 carries the post-translational modification Phosphotyrosine; by autocatalysis. Ser275 carries the phosphoserine modification. One can recognise a Protein kinase domain in the interval 288-539 (ITMKHKLGGG…PSFAETHQAF (252 aa)). Position 294-302 (294-302 (LGGGQYGEV)) interacts with ATP. Phosphotyrosine is present on residues Tyr299 and Tyr303. Residues Lys317 and 362–368 (EYMPYGN) contribute to the ATP site. Asp409 acts as the Proton acceptor in catalysis. The Kinase activation loop signature appears at 427 to 451 (DFGLSRLMTGDTYTAHAGAKFPIKW). Tyr439 bears the Phosphotyrosine; by autocatalysis and SRC-type Tyr-kinases mark. Tyr459 carries the post-translational modification Phosphotyrosine. Tyr568 is modified (phosphotyrosine; by autocatalysis). Phosphoserine occurs at positions 606, 621, 632, 634, and 656. 2 disordered regions span residues 612–642 (IRSTQASSGSPALPRKQRDKSPSSLLEDAKE) and 655–674 (SSFMKKRNAPTPPKRSSSFR). The Nuclear localization signal motif lies at 659–661 (KKR). 3 positions are modified to phosphoserine: Ser670, Ser671, and Ser672. Tyr684 carries the phosphotyrosine; by autocatalysis modification. The interval 695–930 (SLQNADGFSV…AVLPTTHNHK (236 aa)) is F-actin-binding. Position 719 is a phosphotyrosine (Tyr719). The disordered stretch occupies residues 765–796 (LRAGKPTASDDTSKPFPRSNSTSSMSSGLPEQ). The residue at position 778 (Lys778) is an N6-acetyllysine. Over residues 782–793 (RSNSTSSMSSGL) the composition is skewed to polar residues. Position 785 is a phosphoserine (Ser785). Residue Thr802 is modified to Phosphothreonine. Polar residues predominate over residues 809–825 (RSKLQLERTVSTSSQPE). Positions 809–858 (RSKLQLERTVSTSSQPEENVDRANDMLPKKSEEGAAPARERPKAKLLPRG) are disordered. Phosphoserine is present on residues Ser819 and Ser822. Residues 827 to 851 (NVDRANDMLPKKSEEGAAPARERPK) show a composition bias toward basic and acidic residues. Ser915 and Ser936 each carry phosphoserine. The tract at residues 964-1059 (HQVTSSGDKD…TSSISPAKMA (96 aa)) is disordered. Residues 1020-1182 (EGGKKAAPGP…VQEISDVVQR (163 aa)) form an F-actin-binding region.

It belongs to the protein kinase superfamily. Tyr protein kinase family. ABL subfamily. As to quaternary structure, interacts with PSMA7. Interacts with CTTN. Found in a complex with ABL1, ABL2, CRK and UNC119; leading to the inhibition of CRK phosphorylation by ABL kinases. Requires Mg(2+) as cofactor. It depends on Mn(2+) as a cofactor. Post-translationally, phosphorylated at Tyr-261 by ABL1 in response to oxidative stress. Phosphorylated by PDGFRB. Polyubiquitinated. Polyubiquitination of ABL2 leads to degradation. In terms of tissue distribution, most abundant in adult mouse brain, especially in synapse-rich regions.

The protein localises to the cytoplasm. The protein resides in the cytoskeleton. It carries out the reaction L-tyrosyl-[protein] + ATP = O-phospho-L-tyrosyl-[protein] + ADP + H(+). Its activity is regulated as follows. Stabilized in the inactive form by an association between the SH3 domain and the SH2-TK linker region, interactions of the N-terminal cap, and contributions from an N-terminal myristoyl group and phospholipids. Activated by autophosphorylation as well as by SRC-family kinase-mediated phosphorylation. Activated by RIN1 binding to the SH2 and SH3 domains. Inhibited by imatinib mesylate (Gleevec). Phosphatidylinositol 4,5-bisphosphate (PIP2), a highly abundant phosphoinositide known to regulate cytoskeletal and membrane proteins, inhibits the tyrosine kinase activity. Its function is as follows. Non-receptor tyrosine-protein kinase that plays an ABL1-overlapping role in key processes linked to cell growth and survival such as cytoskeleton remodeling in response to extracellular stimuli, cell motility and adhesion, receptor endocytosis, autophagy, DNA damage response and apoptosis. Coordinates actin remodeling through tyrosine phosphorylation of proteins controlling cytoskeleton dynamics like MYH10 (involved in movement); CTTN (involved in signaling); or TUBA1 and TUBB (microtubule subunits). Binds directly F-actin and regulates actin cytoskeletal structure through its F-actin-bundling activity. Involved in the regulation of cell adhesion and motility through phosphorylation of key regulators of these processes such as CRK, CRKL or DOK1. Required for adhesion-dependent phosphorylation of ARHGAP35 which promotes its association with RASA1, resulting in recruitment of ARHGAP35 to the cell periphery where it inhibits RHO. Phosphorylates multiple receptor tyrosine kinases like PDGFRB and other substrates which are involved in endocytosis regulation such as RIN1. In brain, may regulate neurotransmission by phosphorylating proteins at the synapse. Finally, functions as its own regulator through autocatalytic activity as well as through phosphorylation of its inhibitor, ABI1. Positively regulates chemokine-mediated T-cell migration, polarization, and homing to lymph nodes and immune-challenged tissues, potentially via activation of NEDD9/HEF1 and RAP1. The protein is Tyrosine-protein kinase ABL2 of Mus musculus (Mouse).